The primary structure comprises 123 residues: Large ribosomal subunit protein bL12 (123 aa).

Belongs to the bacterial ribosomal protein bL12 family. Homodimer. Part of the ribosomal stalk of the 50S ribosomal subunit. Forms a multimeric L10(L12)X complex, where L10 forms an elongated spine to which 2 to 4 L12 dimers bind in a sequential fashion. Binds GTP-bound translation factors.

Functionally, forms part of the ribosomal stalk which helps the ribosome interact with GTP-bound translation factors. Is thus essential for accurate translation. This Borrelia turicatae (strain 91E135) protein is Large ribosomal subunit protein bL12.